The following is a 390-amino-acid chain: Small ribosomal subunit protein uS9m (390 aa).

The segment at 368 to 390 (PRIRERKKPGQEGARRKFTWKKR) is disordered.

This sequence belongs to the universal ribosomal protein uS9 family. As to quaternary structure, component of the mitochondrial ribosome small subunit (28S) which comprises a 12S rRNA and about 30 distinct proteins.

The protein resides in the mitochondrion. This Mus musculus (Mouse) protein is Small ribosomal subunit protein uS9m (Mrps9).